Reading from the N-terminus, the 257-residue chain is MRILITNDDGINADGLAALERIAAQLSDDVWVCAPEYEQSGASRALTLAEPIRVRRLDDRKFSTTGTPTDCVMLAVHELVKGRRPDLLLSGVNRGANLAEDVSMSGTVAGAIEGMALGVPSIALSQMGFYEPGESFEPAEAFAPGIIKRLVELGWPADVVLNVNFPNRPVEEITEVEVTRQGFRDVHVRHAERRTDLRGKEYYWIGFRQERSSPPDGTDLRALYEGKISVTPLHIDLTHQPAVFDLKGKLGGAPPKV.

The a divalent metal cation site is built by D8, D9, S40, and N93.

This sequence belongs to the SurE nucleotidase family. A divalent metal cation is required as a cofactor.

Its subcellular location is the cytoplasm. The enzyme catalyses a ribonucleoside 5'-phosphate + H2O = a ribonucleoside + phosphate. Functionally, nucleotidase that shows phosphatase activity on nucleoside 5'-monophosphates. The chain is 5'-nucleotidase SurE from Phenylobacterium zucineum (strain HLK1).